The sequence spans 493 residues: MQSRIVGLAPAFSLFPNLNTPHKTFTFHQILVLIITFTAYASFHASRKPPSIVKSVLGPPSLNSSSIDNGWAPFNGTQGTKRLGELDLAFLSSYALGMYFAGHLGDRIDLRYFLVFGMMGSGILTLVFGLGYWMNVHTLGFYMSVQIVCGLFQSIGWPCVVSVVGNWCGKEKRGLIMGLWNSHTSVGNILGSVIASSVLDFGWGWSFVLPGVLVLVSGVVVFMFLVVSPNDLGFEELGKEIEIEMSLGENVEESLRKHEAEGAVLLENVDDSSFAIGFLEAWRLPGVAPYAFCLFFSKLVAYTFLYWLPYYLRHTAVAGVNLSHKTAGILSTVFDVGGVLGGISAGFISDKIKARALTSITFLALSIPALIMYRVYGSVSMFINIVLMFISGLLVNGPYALITTAVAADLGTQDSIKGNGRALATVTAIIDGTGSVGAALGPLLAGYISSRGWNSVFFMLIVSIFFAGLFLVRLAKSEINTMRSGELIASSVP.

The next 12 membrane-spanning stretches (helical) occupy residues F25–H44, L83–H103, F113–W133, V145–G165, S185–W205, F207–V227, F292–L312, G328–I348, I352–M372, V375–V395, A428–I448, and G452–V472.

The protein belongs to the major facilitator superfamily. Organophosphate:Pi antiporter (OPA) (TC 2.A.1.4) family.

Its subcellular location is the membrane. This chain is Putative glycerol-3-phosphate transporter 5, found in Arabidopsis thaliana (Mouse-ear cress).